A 440-amino-acid chain; its full sequence is Methylenetetrahydrofolate--tRNA-(uracil-5-)-methyltransferase TrmFO (440 aa).

14-19 (GAGLAG) serves as a coordination point for FAD.

The protein belongs to the MnmG family. TrmFO subfamily. FAD is required as a cofactor.

It is found in the cytoplasm. The enzyme catalyses uridine(54) in tRNA + (6R)-5,10-methylene-5,6,7,8-tetrahydrofolate + NADH + H(+) = 5-methyluridine(54) in tRNA + (6S)-5,6,7,8-tetrahydrofolate + NAD(+). It carries out the reaction uridine(54) in tRNA + (6R)-5,10-methylene-5,6,7,8-tetrahydrofolate + NADPH + H(+) = 5-methyluridine(54) in tRNA + (6S)-5,6,7,8-tetrahydrofolate + NADP(+). In terms of biological role, catalyzes the folate-dependent formation of 5-methyl-uridine at position 54 (M-5-U54) in all tRNAs. The sequence is that of Methylenetetrahydrofolate--tRNA-(uracil-5-)-methyltransferase TrmFO from Bdellovibrio bacteriovorus (strain ATCC 15356 / DSM 50701 / NCIMB 9529 / HD100).